Consider the following 1225-residue polypeptide: NHS-like protein 2 (1225 aa).

Disordered stretches follow at residues 161–180, 193–213, 291–371, 466–510, 543–632, 670–766, 812–1009, 1042–1093, and 1128–1203; these read TFRS…PQSA, QLSE…SLSL, NFSQ…ESMG, HMPE…TTDV, LSAQ…PEST, QGSS…KFPK, KTNP…KKPS, DTKC…DKTA, and KEPG…KTTN. Polar residues-rich tracts occupy residues 291 to 315 and 339 to 350; these read NFSQ…TSDI and SLTSPVLRTPSS. Serine 500 carries the post-translational modification Phosphoserine. The segment covering 552-568 has biased composition (basic residues); it reads RRQRSKSISLRKAKKKP. A Phosphoserine modification is found at serine 576. Low complexity predominate over residues 675-688; it reads SLASPSTSRATTPS. The residue at position 691 (serine 691) is a Phosphoserine. 2 stretches are compositionally biased toward polar residues: residues 710–730 and 812–827; these read SPSS…SMSL and KTNP…TQSD. A compositionally biased stretch (acidic residues) spans 841–851; the sequence is PEDDIESPEYA. Over residues 852-867 the composition is skewed to basic and acidic residues; that stretch reads EEPRAEEVFTLPERKT. Polar residues-rich tracts occupy residues 939–968 and 1054–1065; these read GEST…QPPQ and SLGQRVTSTPQA. A Phosphoserine modification is found at serine 1054. Basic and acidic residues predominate over residues 1082-1093; sequence TEEKSLISDKTA. A compositionally biased stretch (polar residues) spans 1138–1155; sequence RTSSHSPIKNTAESPISE. Over residues 1156–1166 the composition is skewed to low complexity; that stretch reads STATAGSGSSA.

The protein belongs to the NHS family.

This Homo sapiens (Human) protein is NHS-like protein 2.